The chain runs to 40 residues: Muscarinic m1-toxin3 (40 aa).

A disulfide bridge links C3 with C24.

Belongs to the three-finger toxin family. Short-chain subfamily. Aminergic toxin sub-subfamily. As to quaternary structure, monomer. In terms of processing, contains 4 disulfide bonds. Expressed by the venom gland.

The protein resides in the secreted. Functionally, binds irreversibly and specifically to M1 (CHRM1) muscarinic acetylcholine receptors, blocking further binding of antagonists and preventing the action of agonists. This chain is Muscarinic m1-toxin3, found in Dendroaspis angusticeps (Eastern green mamba).